Consider the following 733-residue polypeptide: Centrosomal protein of 68 kDa (733 aa).

The segment covering 71 to 80 (SKEPVADRSK) has biased composition (basic and acidic residues). Disordered stretches follow at residues 71 to 92 (SKEPVADRSKPPLRGPLPSASV), 150 to 207 (GLSQ…SFAN), and 222 to 244 (VVGAGPPLQGSAQPLTSGSDATG). Residues 178 to 190 (SSRSISASSVGSS) are compositionally biased toward low complexity. The span at 231–241 (GSAQPLTSGSD) shows a compositional bias: polar residues. Phosphoserine is present on Ser315. The tract at residues 420–442 (PQLKTKEKEPPFPRQKRGRQHVS) is disordered. A phosphoserine mark is found at Ser453 and Ser459. The interval 497–571 (HSSLQVSDSD…KPLKTQPASK (75 aa)) is disordered. Residues 540–569 (IQPQDSRGKSSLMSNQTLGVSSKPLKTQPA) are compositionally biased toward polar residues.

Interacts with CNTLN; the interaction recruits CEP68 to the centrosome. Interacts with the SCF(FBXW11) complex which contains SKP1, CUL1 and FBXW11; the interaction is probably mediated by FBXW11 and the complex also contains CDK5RAP2 and PCNT. Also interacts with F-box protein BTRC. Interacts with serine/threonine-protein kinase PLK1; the interaction leads to phosphorylation of CEP68 and its subsequent degradation. Interacts with NEK2; the interaction leads to phosphorylation of CEP68. Phosphorylation by PLK1 is required for binding to BTRC in prometaphase. Phosphorylated directly or indirectly by NEK2. NEK2-mediated phosphorylation promotes CEP68 dissociation from the centrosome and its degradation at the onset of mitosis. In terms of processing, ubiquitinated and targeted for proteasomal degradation in early mitosis by the SCF(BTRC) and/or SCF(FBXW11) E3 ubiquitin-protein ligase complexes. Degradation is complete by prometaphase and is required for removal of CDK5RAP2 from the peripheral pericentriolar material and subsequent centriole separation.

It is found in the cytoplasm. It localises to the cytoskeleton. The protein localises to the microtubule organizing center. Its subcellular location is the centrosome. Involved in maintenance of centrosome cohesion, probably as part of a linker structure which prevents centrosome splitting. Required for localization of CDK5RAP2 to the centrosome during interphase. Contributes to CROCC/rootletin filament formation. The sequence is that of Centrosomal protein of 68 kDa (Cep68) from Mus musculus (Mouse).